The sequence spans 2896 residues: Hemocyanin G-type, units Oda to Odg (2896 aa).

The tract at residues 1-419 (NLIRKDVDAL…ADMVVVDKTG (419 aa)) is functional unit Oda. Cu cation is bound at residue histidine 41. The cysteines at positions 47 and 57 are disulfide-linked. Positions 58–60 (CLH) form a cross-link, 2'-(S-cysteinyl)-histidine (Cys-His). The Cu cation site is built by histidine 60, histidine 69, histidine 178, histidine 182, and histidine 209. 2 cysteine pairs are disulfide-bonded: cysteine 168/cysteine 234 and cysteine 321/cysteine 333. The N-linked (GlcNAc...) asparagine glycan is linked to asparagine 386. Residues 420–834 (LNVRKDLQSL…KESGVVFDEL (415 aa)) form a functional unit Odb region. Histidine 460 serves as a coordination point for Cu cation. Cysteine 466 and cysteine 477 are joined by a disulfide. Residues 478 to 480 (CVH) constitute a cross-link (2'-(S-cysteinyl)-histidine (Cys-His)). Residues histidine 480, histidine 489, histidine 601, histidine 605, and histidine 632 each coordinate Cu cation. Cysteine 591 and cysteine 657 are disulfide-bonded. A glycan (N-linked (GlcNAc...) asparagine) is linked at asparagine 804. A functional unit Odc region spans residues 835–1254 (YRSRRDVSSL…GIWVEPVTSA (420 aa)). A Cu cation-binding site is contributed by histidine 875. Cysteine 881 and cysteine 892 are disulfide-bonded. Positions 893 to 895 (CHH) form a cross-link, 2'-(S-cysteinyl)-histidine (Cys-His). Residues histidine 895, histidine 904, histidine 1013, histidine 1017, histidine 1044, and histidine 1292 each contribute to the Cu cation site. Cysteine 1003 and cysteine 1070 are joined by a disulfide. Positions 1255 to 1667 (NRIRKNLNAL…ADIKSEEGNE (413 aa)) are functional unit Odd. Residues cysteine 1298 and cysteine 1309 are joined by a disulfide bond. The segment at residues 1310–1312 (CIH) is a cross-link (2'-(S-cysteinyl)-histidine (Cys-His)). Cu cation-binding residues include histidine 1312, histidine 1321, histidine 1425, histidine 1429, and histidine 1456. A disulfide bond links cysteine 1415 and cysteine 1482. Residue asparagine 1496 is glycosylated (N-linked (GlcNAc...) asparagine). A disulfide bridge links cysteine 1571 with cysteine 1581. Asparagine 1634 is a glycosylation site (N-linked (GlcNAc...) asparagine). The segment at 1668–2085 (YLVRKNVERL…NEDADIDTPL (418 aa)) is functional unit Ode. A Cu cation-binding site is contributed by histidine 1708. A disulfide bridge connects residues cysteine 1714 and cysteine 1725. A cross-link (2'-(S-cysteinyl)-histidine (Cys-His)) is located at residues 1726 to 1728 (CLH). The Cu cation site is built by histidine 1728, histidine 1737, histidine 1849, histidine 1853, and histidine 1880. 2 disulfides stabilise this stretch: cysteine 1839/cysteine 1906 and cysteine 1997/cysteine 2003. Residue asparagine 2055 is glycosylated (N-linked (GlcNAc...) asparagine). The segment at 2086–2502 (NHIRRNVESL…REVHKKTVGD (417 aa)) is functional unit Odf. Histidine 2126 provides a ligand contact to Cu cation. Residues cysteine 2131 and cysteine 2141 are joined by a disulfide bond. Residues 2142-2144 (CLH) constitute a cross-link (2'-(S-cysteinyl)-histidine (Cys-His)). Positions 2144 and 2153 each coordinate Cu cation. The N-linked (GlcNAc...) asparagine glycan is linked to asparagine 2201. Intrachain disulfides connect cysteine 2252/cysteine 2319 and cysteine 2406/cysteine 2411. Positions 2262, 2266, and 2293 each coordinate Cu cation. The segment at 2503-2896 (AIIRKNVNSL…VFLAPAKTTH (394 aa)) is functional unit Odg. Histidine 2543 lines the Cu cation pocket. A disulfide bridge links cysteine 2549 with cysteine 2559. Asparagine 2553 is a glycosylation site (N-linked (GlcNAc...) asparagine). The 2'-(S-cysteinyl)-histidine (Cys-His) cross-link spans 2560-2562 (CQH). Cu cation is bound by residues histidine 2562, histidine 2571, histidine 2671, histidine 2675, and histidine 2702. 2 disulfide bridges follow: cysteine 2661–cysteine 2728 and cysteine 2815–cysteine 2821.

It belongs to the tyrosinase family. Hemocyanin subfamily. Decamers of large identical subunits (350 kDa), each containing 7 globular oxygen-binding functional units: ODA, ODB, ODC, ODD, ODE, ODF, and ODG. Decamer formation requires the presence of magnesium ions. It depends on Cu(2+) as a cofactor.

Hemocyanins are copper-containing oxygen carriers occurring freely dissolved in the hemolymph of many mollusks and arthropods. The protein is Hemocyanin G-type, units Oda to Odg (ODHCY) of Enteroctopus dofleini (North Pacific giant octopus).